We begin with the raw amino-acid sequence, 216 residues long: 1-Cys peroxiredoxin PER1 (216 aa).

The Thioredoxin domain occupies 4-159; sequence ITLGDTVPNL…VLRALDSLLM (156 aa). Residue C46 is the Cysteine sulfenic acid (-SOH) intermediate of the active site. A Bipartite nuclear localization signal motif is present at residues 191-214; that stretch reads KKMFPQGFKTADLPSKKGYLRHTE.

It belongs to the peroxiredoxin family. Prx6 subfamily. As to expression, predominantly expressed in seed. Expressed in endosperm, embryo and aleurone cells. Also detected in young seedlings, abscission zones, stem branching points.

It localises to the nucleus. It is found in the cytoplasm. The catalysed reaction is a hydroperoxide + [thioredoxin]-dithiol = an alcohol + [thioredoxin]-disulfide + H2O. Thiol-specific peroxidase that catalyzes the reduction of hydrogen peroxide and organic hydroperoxides to water and alcohols, respectively. Seems to contribute to the inhibition of germination during stress. In Arabidopsis thaliana (Mouse-ear cress), this protein is 1-Cys peroxiredoxin PER1 (PER1).